We begin with the raw amino-acid sequence, 344 residues long: Beta-1,4-galactosyltransferase 4 (344 aa).

Residues 1–12 (MGCNPPYLLSYR) are Cytoplasmic-facing. The helical; Signal-anchor for type II membrane protein transmembrane segment at 13 to 38 (LRLLLLFTLCLTVLGWATSNYFVGAI) threads the bilayer. The Lumenal portion of the chain corresponds to 39–344 (QVIPRAKNFM…NITVDFWTAA (306 aa)). Residues Cys77 and Cys118 are joined by a disulfide bond. UDP-alpha-D-galactose is bound by residues 129-133 (PHRNR), 168-170 (FNR), and 195-196 (VD). Cys189 and Cys208 form a disulfide bridge. Asp196 lines the Mn(2+) pocket. A glycan (N-linked (GlcNAc...) asparagine) is linked at Asn220. 2 residues coordinate UDP-alpha-D-galactose: Tyr224 and Trp256. Position 258-261 (258-261 (GEDD)) interacts with N-acetyl-D-glucosamine. His289 provides a ligand contact to Mn(2+). 289–291 (HTR) is a UDP-alpha-D-galactose binding site. Residue Arg301 coordinates N-acetyl-D-glucosamine. N-linked (GlcNAc...) asparagine glycosylation is present at Asn335.

The protein belongs to the glycosyltransferase 7 family. Interacts with SLC35A2/UGT1. The cofactor is Mn(2+).

It is found in the golgi apparatus membrane. The protein resides in the secreted. It catalyses the reaction N-acetyl-D-glucosamine + UDP-alpha-D-galactose = beta-D-galactosyl-(1-&gt;4)-N-acetyl-D-glucosamine + UDP + H(+). It carries out the reaction a beta-D-GlcNAc-(1-&gt;3)-beta-D-Gal-(1-&gt;4)-beta-D-Glc-(1&lt;-&gt;1)-Cer(d18:1(4E)) + UDP-alpha-D-galactose = a neolactoside nLc4Cer(d18:1(4E)) + UDP + H(+). The catalysed reaction is 3-O-{beta-D-galactosyl-(1-&gt;3)-[6-O-sulfo-N-acetyl-beta-D-glucosaminyl-(1-&gt;6)]-N-acetyl-alpha-D-galactosaminyl}-L-seryl-[protein] + UDP-alpha-D-galactose = 3-O-{beta-D-galactosyl-(1-&gt;3)-[beta-D-galactosyl-(1-&gt;4)-6-O-sulfo-N-acetyl-beta-D-glucosaminyl-(1-&gt;6)]-N-acetyl-alpha-D-galactosaminyl}-L-seryl-[protein] + UDP + H(+). The enzyme catalyses 3-O-{beta-D-galactosyl-(1-&gt;3)-[6-O-sulfo-N-acetyl-beta-D-glucosaminyl-(1-&gt;6)]-N-acetyl-alpha-D-galactosaminyl}-L-threonyl-[protein] + UDP-alpha-D-galactose = 3-O-{beta-D-galactosyl-(1-&gt;3)-[beta-D-galactosyl-(1-&gt;4)-6-O-sulfo-N-acetyl-beta-D-glucosaminyl-(1-&gt;6)]-N-acetyl-alpha-D-galactosaminyl}-L-threonyl-[protein] + UDP + H(+). The protein operates within protein modification; protein glycosylation. Its pathway is glycolipid biosynthesis. Its function is as follows. Galactose (Gal) transferase involved in the synthesis of terminal N-acetyllactosamine (LacNac) unit present on glycan chains of glycoproteins and glycosphingolipids. Catalyzes the transfer of Gal residue via a beta1-&gt;4 linkage from UDP-Gal to the non-reducing terminal N-acetyl glucosamine 6-O-sulfate (6-O-sulfoGlcNAc) in the linearly growing chain of both N- and O-linked keratan sulfate proteoglycans. Cooperates with B3GNT7 N-acetyl glucosamine transferase and CHST6 and CHST1 sulfotransferases to construct and elongate mono- and disulfated disaccharide units [-&gt;3Galbeta1-&gt;4(6-sulfoGlcNAcbeta)1-&gt;] and [-&gt;3(6-sulfoGalbeta)1-&gt;4(6-sulfoGlcNAcbeta)1-&gt;] within keratan sulfate polymer. Transfers Gal residue via a beta1-&gt;4 linkage to terminal 6-O-sulfoGlcNAc within the LacNac unit of core 2 O-glycans forming 6-sulfo-sialyl-Lewis X (sLex). May contribute to the generation of sLex epitope on mucin-type glycoproteins that serve as ligands for SELL/L-selectin, a major regulator of leukocyte migration. In the biosynthesis pathway of neolacto-series glycosphingolipids, transfers Gal residue via a beta1-&gt;4 linkage to terminal GlcNAc of a lactotriaosylceramide (Lc3Cer) acceptor to form a neolactotetraosylceramide. The protein is Beta-1,4-galactosyltransferase 4 (B4galt4) of Rattus norvegicus (Rat).